We begin with the raw amino-acid sequence, 505 residues long: Zealexin A1 synthase (505 aa).

A helical transmembrane segment spans residues 7 to 26 (IAVGTVAVVAVLSKLKSAVT). Cys442 serves as a coordination point for heme.

This sequence belongs to the cytochrome P450 family. It depends on heme as a cofactor.

It localises to the membrane. It catalyses the reaction (S)-beta-macrocarpene + 3 reduced [NADPH--hemoprotein reductase] + 3 O2 = zealexin A1 + 3 oxidized [NADPH--hemoprotein reductase] + 4 H2O + 4 H(+). Its function is as follows. Involved in production of the antifungal phytoalexin zealexin A1. The enzyme sequentially oxidizes(S)-beta-macrocarpene via alcohol and aldehyde intermediates to form zealexin A1, a maize phytoalexin that provides biochemical protection against fungal infection. The polypeptide is Zealexin A1 synthase (Zea mays (Maize)).